The sequence spans 223 residues: Pre-hexon-linking protein VIII (223 aa).

Thr64 carries the phosphothreonine; by host modification. Residues 112–153 constitute a propeptide that is removed on maturation; it reads GALAPRDLYALTLRGRGIQLNEDLPLSASTLRPDGIFQLGGG. Ser170 carries the post-translational modification Phosphoserine; by host.

This sequence belongs to the adenoviridae hexon-linking protein family. In terms of assembly, interacts with the peripentonal hexons as well as the hexons in the facets. Part of a complex composed of the core-capsid bridging protein, the endosome lysis protein VI and the hexon-linking protein VIII; these interactions bridge the virus core to the capsid. In terms of processing, cleaved by the viral protease during virion maturation. May cause the middle segment to be shed from the capsid.

It is found in the virion. The protein resides in the host nucleus. In terms of biological role, structural component of the virion that acts as a cement protein on the capsid interior and which glue the peripentonal hexons and group-of-nine hexons together. The polypeptide is Pre-hexon-linking protein VIII (Porcine adenovirus A serotype 3 (PAdV-3)).